The primary structure comprises 71 residues: MPKQLKEIKEFLLTARRKDAKSVKIKKNPDNVTKFKVRCSKYLYTIVVTEKEKAEKLKQSLPPGLQVKELK.

Belongs to the eukaryotic ribosomal protein eL38 family.

In Ixodes scapularis (Black-legged tick), this protein is Large ribosomal subunit protein eL38 (RpL38).